A 437-amino-acid polypeptide reads, in one-letter code: Vasoactive intestinal polypeptide receptor 2 (437 aa).

An N-terminal signal peptide occupies residues 1–22 (MRASVVLTCYCWLLVRVSSIHP). Over 23-123 (ECRFHLEIQE…EDESKISFYI (101 aa)) the chain is Extracellular. Disulfide bonds link C37–C60, C51–C92, and C74–C108. 3 N-linked (GlcNAc...) asparagine glycosylation sites follow: N57, N87, and N91. The helical transmembrane segment at 124-149 (LVKAIYTLGYSVSLMSLTTGSIIICL) threads the bilayer. Over 150–157 (FRKLHCTR) the chain is Cytoplasmic. The helical transmembrane segment at 158–179 (NYIHLNLFLSFMLRAISVLVKD) threads the bilayer. At 180–202 (SVLYSSSGLLRCHDQPASWVGCK) the chain is on the extracellular side. C201 and C270 are oxidised to a cystine. Residues 203–227 (LSLVFFQYCIMANFYWLLVEGLYLH) form a helical membrane-spanning segment. Over 228-238 (TLLVAILPPSR) the chain is Cytoplasmic. The chain crosses the membrane as a helical span at residues 239–260 (CFLAYLLIGWGIPSVCIGAWTA). Residues 261-279 (TRLSLEDTGCWDTNDHSIP) lie on the Extracellular side of the membrane. The helical transmembrane segment at 280-303 (WWVIRMPILISIVVNFALFISIVR) threads the bilayer. At 304–324 (ILLQKLTSPDVGGNDQSQYKR) the chain is on the cytoplasmic side. The helical transmembrane segment at 325 to 345 (LAKSTLLLIPLFGVHYMVFAA) threads the bilayer. Residues 346 to 353 (FPIGISST) lie on the Extracellular side of the membrane. Residues 354–377 (YQILFELCVGSFQGLVVAVLYCFL) form a helical membrane-spanning segment. Residues 378-437 (NSEVQCELKRRWRGLCLTQAGSRDYRLHSWSMSRNGSESALQIHRGSRTQSFLQSETSVI) lie on the Cytoplasmic side of the membrane.

This sequence belongs to the G-protein coupled receptor 2 family. Interacts with ADCYAP1/PACAP (via N-terminal extracellular domain); activated by PACAP27 and CAPAC38 neuropeptides. Interacts with VIP; the interaction results in VIPR1 activation. In terms of tissue distribution, expressed at high levels in the MIN6 cells, at moderate levels in pancreatic islets, insulin-secreting cells, lung, brain, stomach, and colon, and at low levels in the heart.

Its subcellular location is the cell membrane. In terms of biological role, g protein-coupled receptor activated by the neuropeptides vasoactive intestinal peptide (VIP) and pituitary adenylate cyclase-activating polypeptide (ADCYAP1/PACAP). Binds VIP and both PACAP27 and PACAP38 bioactive peptides with the order of ligand affinity of VIP = PACAP38 &gt; PACAP27. Ligand binding causes a conformation change that triggers signaling via guanine nucleotide-binding proteins (G proteins) and modulates the activity of downstream effectors. Activates cAMP-dependent pathway. May be coupled to phospholipase C. The protein is Vasoactive intestinal polypeptide receptor 2 of Mus musculus (Mouse).